The chain runs to 88 residues: M-zodatoxin-Lt1a (88 aa).

Residues 1–22 form the signal peptide; that stretch reads MKYFVVALALAVALVCIAESTA. A propeptide spanning residues 23–62 is cleaved from the precursor; the sequence is YDVNEELENELDDLSDAAWLAKAAEDLQALDDFEESEESR. Residues 59 to 62 carry the Processing quadruplet motif motif; it reads EESR.

Cleavage of the propeptide depends on the processing quadruplet motif (XXXR, with at least one of X being E). Expressed by the venom gland.

The protein resides in the secreted. Functionally, has antimicrobial activity against Gram-positive bacteria (A.globiformis VKM Ac-1112 (MIC=0.5 uM), and B.subtilis VKM B-501 (MIC=1.0 uM)), Gram-negative bacteria (E.coli DH5-alpha (MIC=1.0 uM), E.coli MH1 (MIC=0.7 uM), and P.aeruginosa PAO1 (MIC=4.1 uM)), and yeasts (P.pastoris GS115 (MIC=17 uM), and S.cerevisiae Y190 (MIC&gt;33 uM)). Has a moderate hemolytic activity against rabbit erythrocytes. Causes paralysis, but is not lethal when injected into insect (M.domestica) larvae. In Lachesana tarabaevi (Spider), this protein is M-zodatoxin-Lt1a.